The following is a 294-amino-acid chain: UDP-3-O-acyl-N-acetylglucosamine deacetylase (294 aa).

Zn(2+) is bound by residues histidine 75, histidine 232, and aspartate 236. Histidine 259 acts as the Proton donor in catalysis.

The protein belongs to the LpxC family. Zn(2+) is required as a cofactor.

The enzyme catalyses a UDP-3-O-[(3R)-3-hydroxyacyl]-N-acetyl-alpha-D-glucosamine + H2O = a UDP-3-O-[(3R)-3-hydroxyacyl]-alpha-D-glucosamine + acetate. The protein operates within glycolipid biosynthesis; lipid IV(A) biosynthesis; lipid IV(A) from (3R)-3-hydroxytetradecanoyl-[acyl-carrier-protein] and UDP-N-acetyl-alpha-D-glucosamine: step 2/6. Catalyzes the hydrolysis of UDP-3-O-myristoyl-N-acetylglucosamine to form UDP-3-O-myristoylglucosamine and acetate, the committed step in lipid A biosynthesis. The sequence is that of UDP-3-O-acyl-N-acetylglucosamine deacetylase from Sulfurovum sp. (strain NBC37-1).